The sequence spans 53 residues: Sec-independent protein translocase protein TatA (53 aa).

The chain crosses the membrane as a helical span at residues 1-21 (MGMSFSHLLIVLLIIFVLFGA).

The protein belongs to the TatA/E family. The Tat system comprises two distinct complexes: a TatABC complex, containing multiple copies of TatA, TatB and TatC subunits, and a separate TatA complex, containing only TatA subunits. Substrates initially bind to the TatABC complex, which probably triggers association of the separate TatA complex to form the active translocon.

Its subcellular location is the cell inner membrane. Its function is as follows. Part of the twin-arginine translocation (Tat) system that transports large folded proteins containing a characteristic twin-arginine motif in their signal peptide across membranes. TatA could form the protein-conducting channel of the Tat system. The sequence is that of Sec-independent protein translocase protein TatA from Rickettsia africae (strain ESF-5).